The following is a 460-amino-acid chain: GTPase Der (460 aa).

EngA-type G domains follow at residues 2–164 (QSII…HEEF) and 196–368 (IRVG…ENFT). GTP is bound by residues 8-15 (GKPNVGKS), 55-59 (DSGGL), 116-119 (NKVD), 202-209 (GRVNVGKS), 249-253 (DTAGI), and 313-316 (NKWD). The KH-like domain maps to 369-453 (QKIQTSKLNT…PLVIASRKKG (85 aa)).

This sequence belongs to the TRAFAC class TrmE-Era-EngA-EngB-Septin-like GTPase superfamily. EngA (Der) GTPase family. Associates with the 50S ribosomal subunit.

Its function is as follows. GTPase that plays an essential role in the late steps of ribosome biogenesis. This chain is GTPase Der, found in Campylobacter jejuni subsp. jejuni serotype O:23/36 (strain 81-176).